The primary structure comprises 77 residues: Acyl carrier protein (77 aa).

The Carrier domain occupies 1 to 76; that stretch reads MAVFDDVRDV…DVVNYIEKLG (76 aa). O-(pantetheine 4'-phosphoryl)serine is present on S36.

It belongs to the acyl carrier protein (ACP) family. In terms of processing, 4'-phosphopantetheine is transferred from CoA to a specific serine of apo-ACP by AcpS. This modification is essential for activity because fatty acids are bound in thioester linkage to the sulfhydryl of the prosthetic group.

It localises to the cytoplasm. The protein operates within lipid metabolism; fatty acid biosynthesis. In terms of biological role, carrier of the growing fatty acid chain in fatty acid biosynthesis. The protein is Acyl carrier protein of Campylobacter curvus (strain 525.92).